A 251-amino-acid polypeptide reads, in one-letter code: Flap endonuclease Xni (251 aa).

D104 lines the Mg(2+) pocket. The 90-residue stretch at 160–249 (VLPRQLPDYW…IDGNLQQLRL (90 aa)) folds into the 5'-3' exonuclease domain. 5 residues coordinate K(+): L171, A172, P180, V182, and I185. The tract at residues 184 to 189 (GIGPKS) is interaction with DNA.

Belongs to the Xni family. Requires Mg(2+) as cofactor. K(+) is required as a cofactor.

Its function is as follows. Has flap endonuclease activity. During DNA replication, flap endonucleases cleave the 5'-overhanging flap structure that is generated by displacement synthesis when DNA polymerase encounters the 5'-end of a downstream Okazaki fragment. The protein is Flap endonuclease Xni of Salmonella newport (strain SL254).